Here is a 245-residue protein sequence, read N- to C-terminus: Octanoyltransferase (245 aa).

The BPL/LPL catalytic domain maps to 54 to 242 (KTAHEQVWLL…AFEKIFGPTI (189 aa)). Substrate is bound by residues 93 to 100 (RGGEFTYH), 173 to 175 (AIG), and 186 to 188 (GVS). The active-site Acyl-thioester intermediate is the Cys-204.

This sequence belongs to the LipB family.

It localises to the cytoplasm. The enzyme catalyses octanoyl-[ACP] + L-lysyl-[protein] = N(6)-octanoyl-L-lysyl-[protein] + holo-[ACP] + H(+). Its pathway is protein modification; protein lipoylation via endogenous pathway; protein N(6)-(lipoyl)lysine from octanoyl-[acyl-carrier-protein]: step 1/2. Functionally, catalyzes the transfer of endogenously produced octanoic acid from octanoyl-acyl-carrier-protein onto the lipoyl domains of lipoate-dependent enzymes. Lipoyl-ACP can also act as a substrate although octanoyl-ACP is likely to be the physiological substrate. This chain is Octanoyltransferase, found in Bartonella tribocorum (strain CIP 105476 / IBS 506).